The primary structure comprises 453 residues: Probable exopolygalacturonase B (453 aa).

An N-terminal signal peptide occupies residues 1–16 (MKFLALAALFASTVSS). Residues Asn185 and Asn225 are each glycosylated (N-linked (GlcNAc...) asparagine). The active-site Proton donor is the Asp255. Cys257 and Cys274 are disulfide-bonded. Residues Asn263 and Asn275 are each glycosylated (N-linked (GlcNAc...) asparagine). His278 is an active-site residue. 2 PbH1 repeats span residues 295 to 316 (IENV…RLKA) and 327 to 348 (INNV…VLDQ). Residues Asn302, Asn329, Asn354, and Asn366 are each glycosylated (N-linked (GlcNAc...) asparagine). Residues 362 to 405 (PSRVNFTNIVFENIYGTSSGKHGKVVADLTCSPNAVCSGIRLKN) form a PbH1 3 repeat. Cys392 and Cys398 are disulfide-bonded. The N-linked (GlcNAc...) asparagine glycan is linked to Asn436.

This sequence belongs to the glycosyl hydrolase 28 family.

It localises to the secreted. It carries out the reaction [(1-&gt;4)-alpha-D-galacturonosyl](n) + H2O = alpha-D-galacturonate + [(1-&gt;4)-alpha-D-galacturonosyl](n-1). Specific in hydrolyzing the terminal glycosidic bond of polygalacturonic acid and oligogalacturonates. The chain is Probable exopolygalacturonase B (pgxB) from Neosartorya fischeri (strain ATCC 1020 / DSM 3700 / CBS 544.65 / FGSC A1164 / JCM 1740 / NRRL 181 / WB 181) (Aspergillus fischerianus).